The chain runs to 343 residues: General stress protein 30 (343 aa).

This sequence belongs to the polysaccharide pyruvyl transferase family.

The chain is General stress protein 30 (yxaB) from Bacillus subtilis (strain 168).